The following is a 687-amino-acid chain: Polyphosphate kinase (687 aa).

Asn45 is a binding site for ATP. Positions 375 and 405 each coordinate Mg(2+). His435 functions as the Phosphohistidine intermediate in the catalytic mechanism. 3 residues coordinate ATP: Tyr472, Arg568, and His596.

It belongs to the polyphosphate kinase 1 (PPK1) family. Mg(2+) serves as cofactor. An intermediate of this reaction is the autophosphorylated ppk in which a phosphate is covalently linked to a histidine residue through a N-P bond.

It catalyses the reaction [phosphate](n) + ATP = [phosphate](n+1) + ADP. Functionally, catalyzes the reversible transfer of the terminal phosphate of ATP to form a long-chain polyphosphate (polyP). This chain is Polyphosphate kinase, found in Burkholderia vietnamiensis (strain G4 / LMG 22486) (Burkholderia cepacia (strain R1808)).